We begin with the raw amino-acid sequence, 124 residues long: Fluoride-specific ion channel FluC 1 (124 aa).

Helical transmembrane passes span Ala-7 to Val-27, Phe-35 to Gly-55, Leu-63 to Leu-83, and Ile-101 to Trp-121.

This sequence belongs to the fluoride channel Fluc/FEX (TC 1.A.43) family.

The protein localises to the cell membrane. The enzyme catalyses fluoride(in) = fluoride(out). Functionally, fluoride-specific ion channel. Important for reducing fluoride concentration in the cell, thus reducing its toxicity. The chain is Fluoride-specific ion channel FluC 1 from Rubrobacter xylanophilus (strain DSM 9941 / JCM 11954 / NBRC 16129 / PRD-1).